The primary structure comprises 241 residues: 1-(5-phosphoribosyl)-5-[(5-phosphoribosylamino)methylideneamino] imidazole-4-carboxamide isomerase (241 aa).

The active-site Proton acceptor is the D10. D131 functions as the Proton donor in the catalytic mechanism.

This sequence belongs to the HisA/HisF family.

The protein localises to the cytoplasm. It carries out the reaction 1-(5-phospho-beta-D-ribosyl)-5-[(5-phospho-beta-D-ribosylamino)methylideneamino]imidazole-4-carboxamide = 5-[(5-phospho-1-deoxy-D-ribulos-1-ylimino)methylamino]-1-(5-phospho-beta-D-ribosyl)imidazole-4-carboxamide. The protein operates within amino-acid biosynthesis; L-histidine biosynthesis; L-histidine from 5-phospho-alpha-D-ribose 1-diphosphate: step 4/9. The polypeptide is 1-(5-phosphoribosyl)-5-[(5-phosphoribosylamino)methylideneamino] imidazole-4-carboxamide isomerase (Bifidobacterium longum (strain NCC 2705)).